Here is a 185-residue protein sequence, read N- to C-terminus: NADH-ubiquinone oxidoreductase chain 6 (185 aa).

A run of 5 helical transmembrane segments spans residues 4 to 24 (LTYYFIEITIFLAILCTIFII), 33 to 53 (ILYMIALFVIAAMYLYLIGLG), 54 to 74 (IFSLLYIMIYIGAIAVLFLFI), 94 to 114 (LPLVLISLIVLTISGLMIYSN), and 159 to 179 (AFILLVLAIVLLLGIIGPISI).

The protein belongs to the complex I subunit 6 family. In terms of assembly, complex I is composed of 37 different subunits.

Its subcellular location is the mitochondrion membrane. The catalysed reaction is a ubiquinone + NADH + 5 H(+)(in) = a ubiquinol + NAD(+) + 4 H(+)(out). In terms of biological role, core subunit of the mitochondrial membrane respiratory chain NADH dehydrogenase (Complex I) that is believed to belong to the minimal assembly required for catalysis. Complex I functions in the transfer of electrons from NADH to the respiratory chain. The immediate electron acceptor for the enzyme is believed to be ubiquinone. This is NADH-ubiquinone oxidoreductase chain 6 (ND6) from Yarrowia lipolytica (strain CLIB 122 / E 150) (Yeast).